Consider the following 376-residue polypeptide: Putative F-box protein At2g33200 (376 aa).

Positions Y6 to R53 constitute an F-box domain.

In Arabidopsis thaliana (Mouse-ear cress), this protein is Putative F-box protein At2g33200.